Here is a 2412-residue protein sequence, read N- to C-terminus: Centrosomal protein of 295 kDa (2412 aa).

Positions 1 to 540 are necessary for centriole targeting and microtubule association; that stretch reads MKRKGMNTKL…KQADQPEVCC (540 aa). Ser13 carries the post-translational modification Phosphoserine. Coiled coils occupy residues 63–84, 114–134, 209–273, 489–535, and 563–592; these read AEEL…LEKL, AERK…QKNQ, DAHL…DLAR, RRKQ…QADQ, and HQLL…VLKE. Disordered stretches follow at residues 600–641 and 739–762; these read SALV…YQPV and LDSQ…PSPF. Position 634 is a phosphoserine (Ser634). Positions 739–757 are enriched in polar residues; the sequence is LDSQQISSEDSENISSKPS. A coiled-coil region spans residues 811–841; sequence AQQGDLRFLQEQLELQKKVLQARQEAREKLL. Disordered stretches follow at residues 871-891, 973-1005, 1158-1178, and 1216-1240; these read SASA…ATVS, DTQS…QDGS, LSSP…SVRS, and WVDT…QQTG. Composition is skewed to polar residues over residues 993 to 1005, 1158 to 1176, and 1224 to 1240; these read PSQS…QDGS, LSSP…SVSV, and FQSS…QQTG. 2 coiled-coil regions span residues 1300 to 1327 and 1448 to 1493; these read QQDS…EAHE and QHDD…SKQI. Residue Ser1573 is modified to Phosphoserine. 4 disordered regions span residues 1820–1895, 1916–1937, 2028–2048, and 2089–2111; these read LAHD…LSSV, ESFS…EETD, DLSS…SESS, and TEGS…SQHA. Positions 1836–1868 are enriched in basic and acidic residues; it reads SKSHDDNAEAVKVKKSDVEDHAVLSHAVSKEEA. The segment covering 1885–1895 has biased composition (polar residues); the sequence is QEISQEPLSSV. Over residues 1921-1935 the composition is skewed to basic and acidic residues; sequence QTEHLEQESTNKQEE. Over residues 2089 to 2108 the composition is skewed to polar residues; that stretch reads TEGSEQSFQQLRPEFSSQES. The interval 2367–2412 is ALMS motif; the sequence is SLQEAFMTRQTLTERSYQRQREIWNKTRLPQTKVSKEKLPTGCTGS.

As to quaternary structure, interacts (via ALMS motif) with microtubules; this interaction is direct.

The protein localises to the cytoplasm. It localises to the cytoskeleton. The protein resides in the microtubule organizing center. Its subcellular location is the centrosome. It is found in the centriole. The protein localises to the spindle. Centriole-enriched microtubule-binding protein involved in centriole biogenesis. Essential for the generation of the distal portion of new-born centrioles in a CPAP- and CEP120-mediated elongation dependent manner during the cell cycle S/G2 phase after formation of the initiating cartwheel structure. Required for the recruitment of centriolar proteins, such as POC1B, POC5 and CEP135, into the distal portion of centrioles. Also required for centriole-to-centrosome conversion during mitotic progression, but is dispensable for cartwheel removal or centriole disengagement. Binds to and stabilizes centriolar microtubule. May be involved in ciliogenesis. The sequence is that of Centrosomal protein of 295 kDa from Mus musculus (Mouse).